The primary structure comprises 134 residues: MRGVFFVAVAVAIFARSSAEAKLLSEAAPGLAADAVISGESRERFLRVADSEDDDLAAPADDGKTEERAPKFKSLSEINKKLDEEVMVHVSKILGNMGAIHADNIAKARAALEAAHKSGDITDKQLAAGLAKLV.

Residues 1 to 21 (MRGVFFVAVAVAIFARSSAEA) form the signal peptide. The RxLR-dEER signature appears at 44–68 (RFLRVADSEDDDLAAPADDGKTEER). Residues 50 to 72 (DSEDDDLAAPADDGKTEERAPKF) are disordered. The span at 61–70 (DDGKTEERAP) shows a compositional bias: basic and acidic residues.

The protein belongs to the RxLR effector family.

It is found in the secreted. The protein localises to the host cytoplasm. It localises to the host nucleus. Its function is as follows. Effector that, due to the lack of a histidine residue at position 79, is not able to induce cell death in tomato, tobacco, eggplant, potato, or in A.thaliana. In Phytophthora sojae (Soybean stem and root rot agent), this protein is RxLR effector protein Avh238.